The following is a 150-amino-acid chain: uncharacterized protein (150 aa).

Helical transmembrane passes span 12–30, 40–62, 74–96, and 106–128; these read IVQR…YFLF, RLLS…LVLF, IRRT…VLSG, and ALID…SRAV.

The protein localises to the cell membrane. This is an uncharacterized protein from Archaeoglobus fulgidus (strain ATCC 49558 / DSM 4304 / JCM 9628 / NBRC 100126 / VC-16).